The chain runs to 246 residues: Large ribosomal subunit protein uL2 (246 aa).

The disordered stretch occupies residues 197–227 (SPYAHPHGGGSHQKGGTPVPKTAPPGQKVGF).

It belongs to the universal ribosomal protein uL2 family. Part of the 50S ribosomal subunit. Forms a bridge to the 30S subunit in the 70S ribosome.

In terms of biological role, one of the primary rRNA binding proteins. Required for association of the 30S and 50S subunits to form the 70S ribosome, for tRNA binding and peptide bond formation. It has been suggested to have peptidyltransferase activity; this is somewhat controversial. Makes several contacts with the 16S rRNA in the 70S ribosome. The chain is Large ribosomal subunit protein uL2 from Pyrobaculum aerophilum (strain ATCC 51768 / DSM 7523 / JCM 9630 / CIP 104966 / NBRC 100827 / IM2).